Consider the following 157-residue polypeptide: Rieske domain-containing protein (157 aa).

The residue at position 1 (methionine 1) is an N-acetylmethionine. Serine 6 carries the post-translational modification Phosphoserine. 2 Rieske domains span residues 16-127 (TSVC…VDNG) and 17-131 (SVCV…NIYV). [2Fe-2S] cluster is bound by residues cysteine 57, histidine 59, cysteine 80, and histidine 83.

It depends on [2Fe-2S] cluster as a cofactor.

The protein is Rieske domain-containing protein (Rfesd) of Mus musculus (Mouse).